Reading from the N-terminus, the 480-residue chain is F-box only protein 3 (480 aa).

The region spanning 10–56 is the F-box domain; that stretch reads LLTLESLPTDPLLLILSFVDYRDLINCCYVSRRLSQLSTHDPLWRRH. Residues 278 to 408 enclose the ApaG domain; that stretch reads VATTGDITVS…FHMACPTFRV (131 aa). Residues 419-458 are compositionally biased toward acidic residues; sequence EYEEMEEEAEEEEEEENDDSADMDESDESDADENESDEGE. The interval 419-463 is disordered; it reads EYEEMEEEAEEEEEEENDDSADMDESDESDADENESDEGEGEARR.

As to quaternary structure, part of a SCF (SKP1-cullin-F-box) protein ligase complex SCF(FBXO3) consisting of FBXO3, SKP1, CUL1 and RBX1. Interacts with PML, interaction is direct and takes place either alone or within the SCF complex.

It localises to the nucleus. Its pathway is protein modification; protein ubiquitination. In terms of biological role, substrate recognition component of the SCF (SKP1-CUL1-F-box protein)-type E3 ubiquitin ligase complex, SCF(FBXO3), which mediates the ubiquitination and subsequent proteasomal degradation of target proteins. Mediates the ubiquitination of HIPK2 and probably that of EP300, leading to rapid degradation by the proteasome. In the presence of PML, HIPK2 ubiquitination still occurs, but degradation is prevented. PML, HIPK2 and FBXO3 may act synergically to activate p53/TP53-dependent transactivation. The SCF(FBXO3) also acts as a regulator of inflammation by mediating ubiquitination and degradation of FBXL2: specifically recognizes FBXL2 phosphorylated at 'Thr-404' and promotes its ubiquitination. This Mus musculus (Mouse) protein is F-box only protein 3 (Fbxo3).